The primary structure comprises 393 residues: NAD(P)H-quinone oxidoreductase subunit H, chloroplastic (393 aa).

This sequence belongs to the complex I 49 kDa subunit family. In terms of assembly, NDH is composed of at least 16 different subunits, 5 of which are encoded in the nucleus.

The protein localises to the plastid. The protein resides in the chloroplast thylakoid membrane. The enzyme catalyses a plastoquinone + NADH + (n+1) H(+)(in) = a plastoquinol + NAD(+) + n H(+)(out). It catalyses the reaction a plastoquinone + NADPH + (n+1) H(+)(in) = a plastoquinol + NADP(+) + n H(+)(out). Its function is as follows. NDH shuttles electrons from NAD(P)H:plastoquinone, via FMN and iron-sulfur (Fe-S) centers, to quinones in the photosynthetic chain and possibly in a chloroplast respiratory chain. The immediate electron acceptor for the enzyme in this species is believed to be plastoquinone. Couples the redox reaction to proton translocation, and thus conserves the redox energy in a proton gradient. The sequence is that of NAD(P)H-quinone oxidoreductase subunit H, chloroplastic from Nicotiana sylvestris (Wood tobacco).